We begin with the raw amino-acid sequence, 327 residues long: Olfactory receptor 6A2 (327 aa).

At 1 to 26 the chain is on the extracellular side; it reads MEWRNHSGRVSEFVLLGFPAPAPLQV. N5 is a glycosylation site (N-linked (GlcNAc...) asparagine). Residues 27–47 traverse the membrane as a helical segment; sequence LLFALLLLAYVLVLTENTLII. The Cytoplasmic portion of the chain corresponds to 48–55; sequence MAIRNHST. Residues 56–76 form a helical membrane-spanning segment; that stretch reads LHKPMYFFLANMSFLEIWYVT. The Extracellular portion of the chain corresponds to 77–104; it reads VTIPKMLAGFVGSKQDHGQLISFEGCMT. A disulfide bond links C102 and C194. A helical membrane pass occupies residues 105–125; it reads QLYFFLGLGCTECVLLAVMAY. Residues 126 to 144 lie on the Cytoplasmic side of the membrane; it reads DRYMAICYPLHYPVIVSGR. The chain crosses the membrane as a helical span at residues 145 to 165; the sequence is LCVQMAAGSWAGGFGISMVKV. At 166 to 201 the chain is on the extracellular side; it reads FLISGLSYCGPNIINHFFCDVSPLLNLSCTDMSTAE. N-linked (GlcNAc...) asparagine glycosylation is present at N191. A helical membrane pass occupies residues 202-222; sequence LTDFILAIFILLGPLSVTGAS. Topologically, residues 223-242 are cytoplasmic; the sequence is YVAITGAVMHIPSAAGRYKA. A helical transmembrane segment spans residues 243 to 263; sequence FSTCASHLTVVIIFYAASIFI. The Extracellular segment spans residues 264–276; that stretch reads YARPKALSAFDTN. Residues 277–297 form a helical membrane-spanning segment; that stretch reads KLVSVLYAVIVPLLNPIIYCL. Residues 298 to 327 lie on the Cytoplasmic side of the membrane; the sequence is RNQEVKRALCCTLHLYQHQDPDPKKASRNV.

The protein belongs to the G-protein coupled receptor 1 family.

It is found in the cell membrane. Its function is as follows. Odorant receptor. The polypeptide is Olfactory receptor 6A2 (OR6A2) (Homo sapiens (Human)).